Consider the following 139-residue polypeptide: Protein Turandot B (139 aa).

An N-terminal signal peptide occupies residues 1–21 (MNFKTALICFALLLIGTLCSA).

This sequence belongs to the Turandot family.

The protein localises to the secreted. A humoral factor that may play a role in stress tolerance. The sequence is that of Protein Turandot B from Drosophila simulans (Fruit fly).